Consider the following 346-residue polypeptide: tRNA N6-adenosine threonylcarbamoyltransferase (346 aa).

Residues histidine 110 and histidine 114 each coordinate Fe cation. Substrate contacts are provided by residues 132–136 (LLSGG), aspartate 165, glycine 178, and asparagine 274. Position 298 (aspartate 298) interacts with Fe cation.

It belongs to the KAE1 / TsaD family. Fe(2+) serves as cofactor.

It is found in the cytoplasm. The catalysed reaction is L-threonylcarbamoyladenylate + adenosine(37) in tRNA = N(6)-L-threonylcarbamoyladenosine(37) in tRNA + AMP + H(+). Functionally, required for the formation of a threonylcarbamoyl group on adenosine at position 37 (t(6)A37) in tRNAs that read codons beginning with adenine. Is involved in the transfer of the threonylcarbamoyl moiety of threonylcarbamoyl-AMP (TC-AMP) to the N6 group of A37, together with TsaE and TsaB. TsaD likely plays a direct catalytic role in this reaction. The chain is tRNA N6-adenosine threonylcarbamoyltransferase from Borreliella afzelii (strain PKo) (Borrelia afzelii).